The following is a 353-amino-acid chain: S-adenosylmethionine decarboxylase proenzyme (353 aa).

Catalysis depends on residues Glu-9 and Glu-12. Ser-69 acts as the Schiff-base intermediate with substrate; via pyruvic acid in catalysis. Pyruvic acid (Ser); by autocatalysis is present on Ser-69. Cys-83 functions as the Proton donor; for catalytic activity in the catalytic mechanism. Active-site proton acceptor; for processing activity residues include Ser-232 and His-245.

The protein belongs to the eukaryotic AdoMetDC family. Requires pyruvate as cofactor. In terms of processing, is synthesized initially as an inactive proenzyme. Formation of the active enzyme involves a self-maturation process in which the active site pyruvoyl group is generated from an internal serine residue via an autocatalytic post-translational modification. Two non-identical subunits are generated from the proenzyme in this reaction, and the pyruvate is formed at the N-terminus of the alpha chain, which is derived from the carboxyl end of the proenzyme. The post-translation cleavage follows an unusual pathway, termed non-hydrolytic serinolysis, in which the side chain hydroxyl group of the serine supplies its oxygen atom to form the C-terminus of the beta chain, while the remainder of the serine residue undergoes an oxidative deamination to produce ammonia and the pyruvoyl group blocking the N-terminus of the alpha chain.

The catalysed reaction is S-adenosyl-L-methionine + H(+) = S-adenosyl 3-(methylsulfanyl)propylamine + CO2. It participates in amine and polyamine biosynthesis; S-adenosylmethioninamine biosynthesis; S-adenosylmethioninamine from S-adenosyl-L-methionine: step 1/1. The protein is S-adenosylmethionine decarboxylase proenzyme (SAMDC) of Pisum sativum (Garden pea).